A 457-amino-acid polypeptide reads, in one-letter code: Multidrug resistance protein MdtK (457 aa).

Helical transmembrane passes span 11–31 (LLALAIPVVIAQLSQTAMGVV), 46–66 (AVAVGTSIWLPAILFGHGLLL), 93–113 (WLALCVSVLIMLVLYNSDHVI), 127–147 (AVGFLHAIMWGVPGYLFFQVL), 160–180 (GMVIGFVGLLVNIPINYIFIY), 188–208 (LGGVGCGVATASVYWVMFLMM), 243–263 (LPVALALFFEVTLFAVVALLV), 283–301 (LMFMLPMSLSVAATIRVGF), 316–336 (YTSMAVGLLLASVTAVFTIVF), 357–377 (LMLLAALYQLSDAVQVIGSGV), 387–407 (IFFITFTAYWLLGLPSGYLLG), and 418–438 (PAGFWIGFIIGLTAAAILMVL).

This sequence belongs to the multi antimicrobial extrusion (MATE) (TC 2.A.66.1) family. MdtK subfamily.

It localises to the cell inner membrane. Multidrug efflux pump that functions probably as a Na(+)/drug antiporter. The polypeptide is Multidrug resistance protein MdtK (Yersinia pseudotuberculosis serotype O:1b (strain IP 31758)).